The primary structure comprises 845 residues: Translation initiation factor IF-2 (845 aa).

Disordered stretches follow at residues 45–91 (RRKI…SNLS) and 127–209 (EESL…TPKV). Residues 81–91 (SESSMAKSNLS) show a composition bias toward polar residues. Over residues 137 to 149 (TEIHQEEQKEEKN) the composition is skewed to basic and acidic residues. The span at 151–162 (PVQTSPLSSAHS) shows a compositional bias: polar residues. A compositionally biased stretch (basic and acidic residues) spans 179–193 (TEKRKADEIKNDDRH). The 170-residue stretch at 343–512 (PRPPVVTIMG…LLQAELLDLK (170 aa)) folds into the tr-type G domain. Positions 352-359 (GHVDHGKT) are G1. Residue 352–359 (GHVDHGKT) participates in GTP binding. A G2 region spans residues 377-381 (GITQH). The G3 stretch occupies residues 398–401 (DTPG). Residues 398-402 (DTPGH) and 452-455 (NKID) contribute to the GTP site. Residues 452-455 (NKID) are G4. The G5 stretch occupies residues 488–490 (SAK).

This sequence belongs to the TRAFAC class translation factor GTPase superfamily. Classic translation factor GTPase family. IF-2 subfamily.

It localises to the cytoplasm. One of the essential components for the initiation of protein synthesis. Protects formylmethionyl-tRNA from spontaneous hydrolysis and promotes its binding to the 30S ribosomal subunits. Also involved in the hydrolysis of GTP during the formation of the 70S ribosomal complex. This Bartonella quintana (strain Toulouse) (Rochalimaea quintana) protein is Translation initiation factor IF-2.